The following is a 357-amino-acid chain: Scopoletin 8-hydroxylase (357 aa).

Residues 206-307 form the Fe2OG dioxygenase domain; sequence MGTKMVNMNY…RVSVPIFTAP (102 aa). Residue Tyr216 participates in 2-oxoglutarate binding. Residues His231, Asp233, and His288 each coordinate Fe cation. Arg298 and Ser300 together coordinate 2-oxoglutarate.

It belongs to the iron/ascorbate-dependent oxidoreductase family. Requires L-ascorbate as cofactor. Fe(2+) serves as cofactor. In terms of tissue distribution, expressed in both primary and lateral roots under iron-deficient conditions, except in apical root zones, and mostly in the root epidermal layer.

It catalyses the reaction scopoletin + 2-oxoglutarate + O2 = fraxetin + succinate + CO2. It participates in phenylpropanoid metabolism. Functionally, involved in the pathway of sideretin biosynthesis from feruloyl CoA, a redox-active catecholic metabolite exuded by roots in response to iron deficiency in order to facilitate the uptake of iron; this pathway consists in the successive conversion from feruloyl CoA to scopoletin, from scopoletin to fraxetin and from fraxetin to sideretin. Catalyzes the biosynthesis of fraxetin via scopoletin hydroxylation. This is Scopoletin 8-hydroxylase from Arabidopsis thaliana (Mouse-ear cress).